Consider the following 118-residue polypeptide: Late cornified envelope protein 1C (118 aa).

The span at methionine 1–cysteine 10 shows a compositional bias: low complexity. 2 disordered regions span residues methionine 1–lysine 23 and cysteine 87–cysteine 118. A compositionally biased stretch (pro residues) spans glutamine 11–lysine 23. The segment covering proline 90–serine 103 has biased composition (low complexity). The segment covering serine 104 to cysteine 118 has biased composition (gly residues).

It belongs to the LCE family. Interacts with CYSRT1. As to expression, skin-specific. Expression was readily detected in adult trunk skin, adult arm skin, fetal skin, penal skin, vulva, esophagus and tongue. Not expressed in the cervix, rectum, lung, colon, or placenta.

In terms of biological role, precursors of the cornified envelope of the stratum corneum. In Homo sapiens (Human), this protein is Late cornified envelope protein 1C (LCE1C).